Consider the following 397-residue polypeptide: Glutamate 5-kinase (397 aa).

The interval Met1–Val28 is disordered. ATP is bound at residue Lys40. 3 residues coordinate substrate: Ser80, Asp168, and Asn180. Residues Ser200–Asp201 and Ser243–Lys249 each bind ATP. The PUA domain maps to His306–Glu383.

It belongs to the glutamate 5-kinase family.

It is found in the cytoplasm. It catalyses the reaction L-glutamate + ATP = L-glutamyl 5-phosphate + ADP. Its pathway is amino-acid biosynthesis; L-proline biosynthesis; L-glutamate 5-semialdehyde from L-glutamate: step 1/2. Functionally, catalyzes the transfer of a phosphate group to glutamate to form L-glutamate 5-phosphate. This chain is Glutamate 5-kinase, found in Zymomonas mobilis subsp. mobilis (strain ATCC 31821 / ZM4 / CP4).